The following is a 450-amino-acid chain: Tubulin alpha chain (450 aa).

Residue Gln-11 participates in GTP binding. Lys-40 is subject to N6-acetyllysine. 7 residues coordinate GTP: Glu-71, Ser-140, Gly-144, Thr-145, Thr-179, Asn-206, and Asn-228. A Mg(2+)-binding site is contributed by Glu-71. Residue Glu-254 is part of the active site.

This sequence belongs to the tubulin family. As to quaternary structure, dimer of alpha and beta chains. A typical microtubule is a hollow water-filled tube with an outer diameter of 25 nm and an inner diameter of 15 nM. Alpha-beta heterodimers associate head-to-tail to form protofilaments running lengthwise along the microtubule wall with the beta-tubulin subunit facing the microtubule plus end conferring a structural polarity. Microtubules usually have 13 protofilaments but different protofilament numbers can be found in some organisms and specialized cells. It depends on Mg(2+) as a cofactor. In terms of processing, acetylation of alpha chains at Lys-40 stabilizes microtubules and affects affinity and processivity of microtubule motors. This modification has a role in multiple cellular functions, ranging from cell motility, cell cycle progression or cell differentiation to intracellular trafficking and signaling.

The protein resides in the cytoplasm. It is found in the cytoskeleton. It carries out the reaction GTP + H2O = GDP + phosphate + H(+). Tubulin is the major constituent of microtubules, a cylinder consisting of laterally associated linear protofilaments composed of alpha- and beta-tubulin heterodimers. Microtubules grow by the addition of GTP-tubulin dimers to the microtubule end, where a stabilizing cap forms. Below the cap, tubulin dimers are in GDP-bound state, owing to GTPase activity of alpha-tubulin. The protein is Tubulin alpha chain of Oxytricha granulifera (Ciliate).